Reading from the N-terminus, the 255-residue chain is Hydroxyacylglutathione hydrolase (255 aa).

His56, His58, Asp60, His61, His114, Asp133, and His171 together coordinate Zn(2+).

The protein belongs to the metallo-beta-lactamase superfamily. Glyoxalase II family. In terms of assembly, monomer. Requires Zn(2+) as cofactor.

The enzyme catalyses an S-(2-hydroxyacyl)glutathione + H2O = a 2-hydroxy carboxylate + glutathione + H(+). It participates in secondary metabolite metabolism; methylglyoxal degradation; (R)-lactate from methylglyoxal: step 2/2. In terms of biological role, thiolesterase that catalyzes the hydrolysis of S-D-lactoyl-glutathione to form glutathione and D-lactic acid. This Bradyrhizobium sp. (strain BTAi1 / ATCC BAA-1182) protein is Hydroxyacylglutathione hydrolase.